The following is a 195-amino-acid chain: uncharacterized protein (195 aa).

Residues 1 to 11 (MDYIVSPTSSE) are compositionally biased toward polar residues. The segment at 1–118 (MDYIVSPTSS…LDTEGGFVLS (118 aa)) is disordered. Residues 35–46 (SPEDITDSDEQN) show a composition bias toward acidic residues. The segment covering 47 to 63 (DTTTTTSEMSSTSSVPS) has biased composition (low complexity). A compositionally biased stretch (basic and acidic residues) spans 82 to 93 (SDSKLIFDSDNK). The span at 94 to 110 (DQDDEDDEDDEELEGLD) shows a compositional bias: acidic residues.

This is an uncharacterized protein from Acanthamoeba polyphaga mimivirus (APMV).